Consider the following 589-residue polypeptide: Capsid scaffolding protein (589 aa).

Active-site charge relay system residues include His47, Ser118, and His142. Positions 264–273 (EKERPKEPEQ) are enriched in basic and acidic residues. Positions 264-283 (EKERPKEPEQSHVPTESMSH) are disordered. The interval 307–326 (HDGVYLPKDAFFSLIGASRP) is interaction with pAP. 2 disordered regions span residues 421–478 (RSRS…GDRY) and 514–552 (ASPT…AERG). 2 consecutive short sequence motifs (nuclear localization signal) follow at residues 428-433 (KRRRER) and 453-459 (KARKRLK). The span at 453–462 (KARKRLKAHH) shows a compositional bias: basic residues. Positions 514–543 (ASPTTTTSHQAEASEPQASTAAAAPSTASS) are enriched in low complexity. The tract at residues 569–589 (PPKDMVDLNRRLFVAALNKME) is interaction with major capsid protein.

Belongs to the herpesviridae capsid scaffolding protein family. As to quaternary structure, homomultimer. Interacts with major capsid protein. In terms of assembly, exists in a monomer-dimer equilibrium with the dimer being the active species. Post-translationally, capsid scaffolding protein is cleaved by assemblin after formation of the spherical procapsid. As a result, the capsid obtains its mature, icosahedral shape. Cleavages occur at two or more sites: release (R-site) and maturation (M-site).

It localises to the host cytoplasm. It is found in the host nucleus. The enzyme catalyses Cleaves -Ala-|-Ser- and -Ala-|-Ala- bonds in the scaffold protein.. In terms of biological role, acts as a scaffold protein by binding major capsid protein in the cytoplasm, inducing the nuclear localization of both proteins. Multimerizes in the nucleus such as major capsid protein forms the icosahedral T=16 capsid. Autocatalytic cleavage releases the assembly protein, and subsequently abolishes interaction with major capsid protein. Cleavages products are evicted from the capsid before or during DNA packaging. Protease that plays an essential role in virion assembly within the nucleus. Catalyzes the cleavage of the assembly protein after formation of the spherical procapsid. By that cleavage, the capsid matures and gains its icosahedral shape. The cleavage sites seem to include -Ala-Ser-, -Ala-Ala-, as well as Ala-Thr bonds. Assemblin and cleavages products are evicted from the capsid before or during DNA packaging. Its function is as follows. Plays a major role in capsid assembly. Acts as a scaffold protein by binding major capsid protein. Multimerizes in the nucleus such as major capsid protein forms the icosahedral T=16 capsid. Cleaved by assemblin after capsid completion. The cleavages products are evicted from the capsid before or during DNA packaging. This is Capsid scaffolding protein (UL80) from Simian cytomegalovirus (strain Colburn).